Here is a 563-residue protein sequence, read N- to C-terminus: DNA repair protein rhp7 (563 aa).

Positions 1 to 101 (MSSGSRVRGP…TDEEAEDNED (101 aa)) are disordered. Polar residues predominate over residues 39–59 (ESAGQSTGTESEVIQTPTSVE). Residues 78–90 (VKRRNLRNQKKKK) show a composition bias toward basic residues.

Belongs to the RAD7 family.

It localises to the nucleus. Involved in global genome repair (GGR) via nucleotide excision repair (NER), in conjunction with rhp16, after UV irradiation. In Schizosaccharomyces pombe (strain 972 / ATCC 24843) (Fission yeast), this protein is DNA repair protein rhp7 (rhp7).